We begin with the raw amino-acid sequence, 308 residues long: uncharacterized protein (308 aa).

2 stretches are compositionally biased toward polar residues: residues 138–148 (WSFTKHGSNTP) and 205–229 (STSH…QPPS). Disordered stretches follow at residues 138–157 (WSFT…PLCN) and 205–235 (STSH…TDAS).

The protein localises to the cytoplasm. This is an uncharacterized protein from Schizosaccharomyces pombe (strain 972 / ATCC 24843) (Fission yeast).